The primary structure comprises 193 residues: Adenylate kinase (193 aa).

ATP is bound at residue 10–18 (GVPGVGGTT).

The protein belongs to the archaeal adenylate kinase family. As to quaternary structure, monomer.

Its subcellular location is the cytoplasm. The catalysed reaction is AMP + ATP = 2 ADP. In Methanococcus aeolicus (strain ATCC BAA-1280 / DSM 17508 / OCM 812 / Nankai-3), this protein is Adenylate kinase.